Here is a 496-residue protein sequence, read N- to C-terminus: Lysine--tRNA ligase (496 aa).

Glu405 and Glu412 together coordinate Mg(2+).

This sequence belongs to the class-II aminoacyl-tRNA synthetase family. In terms of assembly, homodimer. The cofactor is Mg(2+).

The protein localises to the cytoplasm. The enzyme catalyses tRNA(Lys) + L-lysine + ATP = L-lysyl-tRNA(Lys) + AMP + diphosphate. The protein is Lysine--tRNA ligase of Vesicomyosocius okutanii subsp. Calyptogena okutanii (strain HA).